Reading from the N-terminus, the 480-residue chain is Protein disulfide-isomerase 5-4 (480 aa).

N-linked (GlcNAc...) asparagine glycosylation is found at Asn-74 and Asn-99. In terms of domain architecture, Thioredoxin spans Phe-120–Glu-263. Residues Cys-170 and Cys-173 each act as nucleophile in the active site. The cysteines at positions 170 and 173 are disulfide-linked. Asn-280, Asn-326, and Asn-376 each carry an N-linked (GlcNAc...) asparagine glycan. Residues Phe-439–Ile-459 traverse the membrane as a helical segment.

It belongs to the protein disulfide isomerase family. Widely expressed.

It localises to the membrane. Functionally, acts as a protein-folding catalyst that interacts with nascent polypeptides to catalyze the formation, isomerization, and reduction or oxidation of disulfide bonds. The protein is Protein disulfide-isomerase 5-4 (PDIL5-4) of Arabidopsis thaliana (Mouse-ear cress).